The sequence spans 364 residues: Lipoyl synthase, chloroplastic (364 aa).

A chloroplast-targeting transit peptide spans 1-70 (MEQTLFNPSI…PNVKKPEWLR (70 aa)). Positions 32–52 (STNSPSSNTKTTTVTVPSKKT) are enriched in low complexity. The disordered stretch occupies residues 32-64 (STNSPSSNTKTTTVTVPSKKTMGPYTGRDPNVK). 7 residues coordinate [4Fe-4S] cluster: Cys-95, Cys-100, Cys-106, Cys-126, Cys-130, Cys-133, and Ser-341. Residues 109 to 330 (GGGDGIATAT…KEYGESIGFR (222 aa)) enclose the Radical SAM core domain.

The protein belongs to the radical SAM superfamily. Lipoyl synthase family. Requires [4Fe-4S] cluster as cofactor.

Its subcellular location is the plastid. It localises to the chloroplast. It carries out the reaction [[Fe-S] cluster scaffold protein carrying a second [4Fe-4S](2+) cluster] + N(6)-octanoyl-L-lysyl-[protein] + 2 oxidized [2Fe-2S]-[ferredoxin] + 2 S-adenosyl-L-methionine + 4 H(+) = [[Fe-S] cluster scaffold protein] + N(6)-[(R)-dihydrolipoyl]-L-lysyl-[protein] + 4 Fe(3+) + 2 hydrogen sulfide + 2 5'-deoxyadenosine + 2 L-methionine + 2 reduced [2Fe-2S]-[ferredoxin]. It functions in the pathway protein modification; protein lipoylation via endogenous pathway; protein N(6)-(lipoyl)lysine from octanoyl-[acyl-carrier-protein]: step 2/2. Functionally, catalyzes the radical-mediated insertion of two sulfur atoms into the C-6 and C-8 positions of the octanoyl moiety bound to the lipoyl domains of lipoate-dependent enzymes, thereby converting the octanoylated domains into lipoylated derivatives. The chain is Lipoyl synthase, chloroplastic from Ricinus communis (Castor bean).